A 1033-amino-acid polypeptide reads, in one-letter code: uncharacterized protein (1033 aa).

Coiled-coil stretches lie at residues E212–N326, I405–F582, L615–N771, and K797–N1019.

This is an uncharacterized protein from Plasmodium falciparum (isolate 3D7).